Here is a 554-residue protein sequence, read N- to C-terminus: Aspartyl/glutamyl-tRNA(Asn/Gln) amidotransferase subunit B (554 aa).

The tract at residues 491-554 (AEQPTAPPPE…TPVSHQDAHA (64 aa)) is disordered. Residues 502-540 (ESAAETPEAPPAVEDAPPEAPTEAITAEAGSAEAITAAS) are compositionally biased toward low complexity.

The protein belongs to the GatB/GatE family. GatB subfamily. In terms of assembly, heterotrimer of A, B and C subunits.

It carries out the reaction L-glutamyl-tRNA(Gln) + L-glutamine + ATP + H2O = L-glutaminyl-tRNA(Gln) + L-glutamate + ADP + phosphate + H(+). The enzyme catalyses L-aspartyl-tRNA(Asn) + L-glutamine + ATP + H2O = L-asparaginyl-tRNA(Asn) + L-glutamate + ADP + phosphate + 2 H(+). In terms of biological role, allows the formation of correctly charged Asn-tRNA(Asn) or Gln-tRNA(Gln) through the transamidation of misacylated Asp-tRNA(Asn) or Glu-tRNA(Gln) in organisms which lack either or both of asparaginyl-tRNA or glutaminyl-tRNA synthetases. The reaction takes place in the presence of glutamine and ATP through an activated phospho-Asp-tRNA(Asn) or phospho-Glu-tRNA(Gln). The chain is Aspartyl/glutamyl-tRNA(Asn/Gln) amidotransferase subunit B from Gloeobacter violaceus (strain ATCC 29082 / PCC 7421).